The primary structure comprises 234 residues: Accessory gland protein Acp29AB (234 aa).

The first 21 residues, Met1–Gly21, serve as a signal peptide directing secretion. N-linked (GlcNAc...) asparagine glycans are attached at residues Asn61 and Asn164. The 98-residue stretch at Val137–Ala234 folds into the C-type lectin domain. 2 disulfide bridges follow: Cys139–Cys228 and Cys207–Cys220.

In terms of tissue distribution, main cells of the accessory gland and in seminal fluid.

It localises to the secreted. In terms of biological role, responsible for physiological and behavioral changes in mated female flies. This is Accessory gland protein Acp29AB (Acp29AB) from Drosophila melanogaster (Fruit fly).